The sequence spans 1875 residues: Protein MLP1 (1875 aa).

The residue at position 2 (S2) is an N-acetylserine. Coiled coils occupy residues 69-487 (ELKA…IQYL) and 531-1678 (ERLV…SAES). A Phosphothreonine modification is found at T337. S379 carries the phosphoserine modification. A Required for nuclear localization motif is present at residues 1496 to 1565 (QPSNINMEEI…EEKVEERIKS (70 aa)). The tract at residues 1641–1689 (KKSFDEGKQQAMMKTTLLERKLAKMESQLSETKQSAESPPKSVNNVQNP) is disordered. Polar residues predominate over residues 1667-1688 (SQLSETKQSAESPPKSVNNVQN). S1670 and S1710 each carry phosphoserine. The segment covering 1716–1725 (KLNSKSSSGG) has biased composition (low complexity). The segment at 1716 to 1875 (KLNSKSSSGG…TDKVNDENSI (160 aa)) is disordered. The segment covering 1728–1737 (PFTSPSPNKH) has biased composition (polar residues). Phosphoserine is present on S1733. Residues 1738–1748 (LQNDNDKRESL) are compositionally biased toward basic and acidic residues. The segment covering 1787 to 1801 (TSNNPAQKDSSNRNV) has biased composition (polar residues). S1803 is modified (phosphoserine). Composition is skewed to basic and acidic residues over residues 1807 to 1840 (TEKK…GELK) and 1865 to 1875 (ETDKVNDENSI). A coiled-coil region spans residues 1834-1866 (DEVGELKNDEDDTTENINESKKIKTEDEEEKET).

In terms of assembly, component of the nuclear pore complex (NPC). NPC constitutes the exclusive means of nucleocytoplasmic transport. NPCs allow the passive diffusion of ions and small molecules and the active, nuclear transport receptor-mediated bidirectional transport of macromolecules such as proteins, RNAs, ribonucleoparticles (RNPs), and ribosomal subunits across the nuclear envelope. Due to its 8-fold rotational symmetry, all subunits are present with 8 copies or multiples thereof. Interacts with NAB2, a hnRNP required for mRNA export. Interacts with MLP2. Post-translationally, may be phosphorylated by CDC28.

The protein localises to the nucleus. The protein resides in the nuclear pore complex. Together with the closely related MLP2, involved in the structural and functional organization of perinuclear chromatin. Together with MLP2, associates with the nuclear pore complex and form filamentous structures along the nuclear periphery. Has a role in the localization of Esc1 to nucleolar regions. Together with MLP2, mediates tethering of the some telomeres to the nuclear periphery, probably mediated by YKU70/YKU80 (HDF1/HDF2) heterodimer and show perinuclear location dependent silencing. MLP1 and MLP2 are involved in telomere length regulation but not silencing or telomere anchoring. Recognizes the 5'-splice site of pre-mRNAs and retains unspliced pre-mRNA in the nucleus without affecting splicing itself. The chain is Protein MLP1 (MLP1) from Saccharomyces cerevisiae (strain ATCC 204508 / S288c) (Baker's yeast).